The sequence spans 312 residues: Ribosomal protein L11 methyltransferase (312 aa).

S-adenosyl-L-methionine is bound by residues Thr-160, Gly-181, Asp-203, and Asn-246.

Belongs to the methyltransferase superfamily. PrmA family.

The protein resides in the cytoplasm. It carries out the reaction L-lysyl-[protein] + 3 S-adenosyl-L-methionine = N(6),N(6),N(6)-trimethyl-L-lysyl-[protein] + 3 S-adenosyl-L-homocysteine + 3 H(+). Methylates ribosomal protein L11. In Staphylococcus epidermidis (strain ATCC 12228 / FDA PCI 1200), this protein is Ribosomal protein L11 methyltransferase.